The following is a 243-amino-acid chain: Chromosome partition protein MukE (243 aa).

Residues 223–243 are disordered; that stretch reads LMENDTKSADEIDEEFDGEQE. Positions 233–243 are enriched in acidic residues; sequence EIDEEFDGEQE.

This sequence belongs to the MukE family. In terms of assembly, interacts, and probably forms a ternary complex, with MukF and MukB. The complex formation is stimulated by calcium or magnesium.

The protein localises to the cytoplasm. The protein resides in the nucleoid. In terms of biological role, involved in chromosome condensation, segregation and cell cycle progression. May participate in facilitating chromosome segregation by condensation DNA from both sides of a centrally located replisome during cell division. Probably acts via its interaction with MukB and MukF. This chain is Chromosome partition protein MukE, found in Haemophilus influenzae (strain ATCC 51907 / DSM 11121 / KW20 / Rd).